Reading from the N-terminus, the 215-residue chain is Cytochrome b6 (215 aa).

Residues 32 to 52 (IFYCLGGITFTLFLVQVATGF) traverse the membrane as a helical segment. Heme c is bound at residue cysteine 35. 2 residues coordinate heme b: histidine 86 and histidine 100. The next 3 membrane-spanning stretches (helical) occupy residues 90 to 110 (ASMM…TGGF), 116 to 136 (LTWI…VTGY), and 186 to 206 (LHTF…FLMI). Residues histidine 187 and histidine 202 each contribute to the heme b site.

This sequence belongs to the cytochrome b family. PetB subfamily. As to quaternary structure, the 4 large subunits of the cytochrome b6-f complex are cytochrome b6, subunit IV (17 kDa polypeptide, PetD), cytochrome f and the Rieske protein, while the 4 small subunits are PetG, PetL, PetM and PetN. The complex functions as a dimer. The cofactor is heme b. Heme c serves as cofactor.

Its subcellular location is the plastid. The protein resides in the chloroplast thylakoid membrane. Its function is as follows. Component of the cytochrome b6-f complex, which mediates electron transfer between photosystem II (PSII) and photosystem I (PSI), cyclic electron flow around PSI, and state transitions. The chain is Cytochrome b6 from Tupiella akineta (Green alga).